We begin with the raw amino-acid sequence, 1017 residues long: NLR family CARD domain-containing protein 4 (1017 aa).

The region spanning 1–88 (MNFIKENSQV…PLFQELHGLS (88 aa)) is the CARD domain. Positions 95–298 (EEDLDDLAQE…QFGALIAEVG (204 aa)) are nucleotide-binding domain (NBD). One can recognise an NACHT domain in the interval 163–476 (SPCIIEGESG…VTKGNGHLQK (314 aa)). 169-176 (GESGKGKS) provides a ligand contact to ATP. Positions 356 to 463 (SHTQTTLFCT…RLSSLLTSGE (108 aa)) are winged-helix domain (WHD). At Ser533 the chain carries Phosphoserine. 12 LRR repeats span residues 578 to 598 (FFRG…LFDF), 649 to 672 (KQEF…DIKY), 728 to 751 (VTNL…LTDN), 755 to 778 (LKNL…KLAE), 780 to 805 (LTNL…DYIV), 817 to 840 (EIQL…LHNL), 841 to 863 (ARLS…ALQQ), 871 to 895 (LEQL…LLEQ), 904 to 926 (KLGL…FFEK), 929 to 956 (LENF…GFEN), 958 to 978 (KELV…SLVR), and 992 to 1014 (EVQL…AFKL).

Homooligomer; homooligomerizes following activation of Naip proteins by pathogenic proteins such as S.typhimurium (Salmonella) flagellin or PrgJ. Component of the NLRC4 inflammasome, at least composed of NLRC4, caspase-1 (CASP1) and some NAIP family member. Interacts with EIF2AK2/PKR. Phosphorylated at Ser-533 following infection of macrophages with S.typhimurium (Salmonella). Phosphorylation is essential for NLRC4 inflammasome function to promote caspase-1 activation and pyroptosis. PRKCD phosphorylates Ser-533 in vitro.

The protein resides in the cytoplasm. The protein localises to the cytosol. Its function is as follows. Key component of inflammasomes that indirectly senses specific proteins from pathogenic bacteria and fungi and responds by assembling an inflammasome complex that promotes caspase-1 activation, cytokine production and macrophage pyroptosis. The NLRC4 inflammasome is activated as part of the innate immune response to a range of intracellular bacteria. This Bos taurus (Bovine) protein is NLR family CARD domain-containing protein 4 (NLRC4).